Reading from the N-terminus, the 461-residue chain is Fumarate hydratase class II (461 aa).

Substrate is bound by residues 97 to 99, 127 to 130, 137 to 139, and Thr185; these read SGT, HPND, and SSN. The active-site Proton donor/acceptor is His186. Residue Ser316 is part of the active site. Substrate-binding positions include Ser317 and 322–324; that span reads KVN.

Belongs to the class-II fumarase/aspartase family. Fumarase subfamily. Homotetramer.

Its subcellular location is the cytoplasm. It carries out the reaction (S)-malate = fumarate + H2O. It functions in the pathway carbohydrate metabolism; tricarboxylic acid cycle; (S)-malate from fumarate: step 1/1. In terms of biological role, involved in the TCA cycle. Catalyzes the stereospecific interconversion of fumarate to L-malate. This chain is Fumarate hydratase class II, found in Staphylococcus aureus (strain MSSA476).